The chain runs to 1561 residues: Adhesion G protein-coupled receptor B2 (1561 aa).

Positions 1-20 (MTPACPLLLSVILSLRLATA) are cleaved as a signal peptide. The Extracellular portion of the chain corresponds to 21 to 930 (FDPAPSACSA…ELAGAPSVPL (910 aa)). Residues Asn-94, Asn-182, and Asn-183 are each glycosylated (N-linked (GlcNAc...) asparagine). A glycan (O-linked (Xyl...) (chondroitin sulfate) serine) is linked at Ser-257. 4 TSP type-1 domains span residues 300–353 (DPAA…ATCP), 355–408 (HGVW…AACP), 410–463 (EGQW…LDCP), and 466–519 (DGKW…KRCP). 14 disulfides stabilise this stretch: Cys-312-Cys-346, Cys-316-Cys-352, Cys-327-Cys-336, Cys-367-Cys-402, Cys-371-Cys-407, Cys-382-Cys-392, Cys-422-Cys-457, Cys-426-Cys-462, Cys-437-Cys-447, Cys-478-Cys-513, Cys-482-Cys-518, Cys-493-Cys-503, Cys-525-Cys-560, and Cys-548-Cys-578. Asn-347 carries an N-linked (GlcNAc...) asparagine glycan. The N-linked (GlcNAc...) asparagine glycan is linked to Asn-428. Residues Asn-551 and Asn-636 are each glycosylated (N-linked (GlcNAc...) asparagine). In terms of domain architecture, GAIN-B spans 748–918 (DRLFLPKEVL…AVLAQPPKDL (171 aa)). Residues 757-797 (LSLSSPGKPATPGAATAGSPGRGRGPGTVPPGPGHAHQRLL) form a disordered region. Positions 760-775 (SSPGKPATPGAATAGS) are enriched in low complexity. N-linked (GlcNAc...) asparagine glycosylation is present at Asn-861. Cystine bridges form between Cys-868-Cys-900 and Cys-888-Cys-902. Residues 868 to 918 (CASWDYSRADTNSGDWNTESCQTLETQAAHTRCQCQHLSTFAVLAQPPKDL) form a GPS region. Residues 931-951 (VIGCAVSCMALLTLLAIYAAF) form a helical membrane-spanning segment. Residues 952-959 (WRFIKSER) lie on the Cytoplasmic side of the membrane. Residues 960-980 (SIILLNFCLSILASNILILVG) traverse the membrane as a helical segment. Over 981–988 (QSRVLSKG) the chain is Extracellular. The helical transmembrane segment at 989–1009 (VCTMTAAFLHFFFLSSFCWVL) threads the bilayer. Topologically, residues 1010 to 1030 (TEAWQSYLAVIGRMRTRLVRK) are cytoplasmic. A helical transmembrane segment spans residues 1031-1051 (RFLCLGWGLPALVVAVSVGFT). The Extracellular segment spans residues 1052–1072 (RTKGYGTSSYCWLSLEGGLLY). A helical transmembrane segment spans residues 1073 to 1093 (AFVGPAAVIVLVNMLIGIIVF). The Cytoplasmic portion of the chain corresponds to 1094 to 1115 (NKLMARDGVSDKSKKQRAGSER). Residues 1116–1136 (CPWASLLLPCSACGAVPSPLL) form a helical membrane-spanning segment. Topologically, residues 1137 to 1147 (SSASARNAMAS) are extracellular. A helical membrane pass occupies residues 1148 to 1168 (LWSSCVVLPLLALTWMSAVLA). Over 1169-1561 (MTDRRSVLFQ…PPDGDFQTEV (393 aa)) the chain is Cytoplasmic. The residue at position 1345 (Tyr-1345) is a Phosphotyrosine. 3 disordered regions span residues 1355–1377 (LQPG…GTPR), 1417–1447 (FQPP…PGST), and 1491–1561 (RYRS…QTEV). The segment covering 1366–1376 (EAPRARPEGTP) has biased composition (basic and acidic residues). The span at 1491-1502 (RYRSQSSAKEKP) shows a compositional bias: basic and acidic residues. Polar residues predominate over residues 1519 to 1528 (SWSTFKSMTL). Positions 1551–1561 (EPPDGDFQTEV) are enriched in acidic residues.

The protein belongs to the G-protein coupled receptor 2 family. Adhesion G-protein coupled receptor (ADGR) subfamily. In terms of assembly, heterodimer of 2 chains generated by proteolytic processing; the large extracellular N-terminal fragment and the membrane-bound C-terminal fragment predominantly remain associated and non-covalently linked. Interacts with GABPB2. Interacts (via carboxy-terminus) with TAX1BP3. Interacts with GNAZ. Interacts with SH3GL2. Glycosylated. In terms of processing, autoproteolytically processed at the GPS region of the GAIN-B domain; this cleavage modulates receptor activity. Additionally, furin is involved in the cleavage at another site, in the middle of the extracellular domain, generating a soluble fragment. As to expression, specifically expressed in the brain. The peak level in the brain is observed 10 days after birth.

It localises to the cell membrane. Its subcellular location is the secreted. Receptor activity is regulated by proteolytic processing. The long N-terminal has a an inhibitory effect on the constitutive signaling activity. Removal of the N-terminal region induces an increase of the receptor activity. Orphan G-protein coupled receptor involved in cell adhesion and probably in cell-cell interactions. Activates NFAT-signaling pathway, a transcription factor, via the G-protein GNAZ. Involved in angiogenesis inhibition. This chain is Adhesion G protein-coupled receptor B2 (Adgrb2), found in Mus musculus (Mouse).